Consider the following 552-residue polypeptide: Glutamine-dependent NAD(+) synthetase (552 aa).

In terms of domain architecture, CN hydrolase spans Phe5 to Arg245. Glu45 serves as the catalytic Proton acceptor; for glutaminase activity. Lys113 serves as the catalytic For glutaminase activity. Cys149 acts as the Nucleophile; for glutaminase activity in catalysis. The L-glutamine site is built by Ser175 and Lys181. Positions Leu275 to Ser552 are ligase. Gly290 to Ser297 is an ATP binding site. A deamido-NAD(+)-binding site is contributed by Asn373. Thr397 provides a ligand contact to ATP. Residues Glu402 and Lys521 each contribute to the deamido-NAD(+) site.

This sequence in the C-terminal section; belongs to the NAD synthetase family.

The catalysed reaction is deamido-NAD(+) + L-glutamine + ATP + H2O = L-glutamate + AMP + diphosphate + NAD(+) + H(+). It functions in the pathway cofactor biosynthesis; NAD(+) biosynthesis; NAD(+) from deamido-NAD(+) (L-Gln route): step 1/1. Functionally, catalyzes the ATP-dependent amidation of deamido-NAD to form NAD. Uses L-glutamine as a nitrogen source. The sequence is that of Glutamine-dependent NAD(+) synthetase from Rhodobacter capsulatus (Rhodopseudomonas capsulata).